The sequence spans 207 residues: Large ribosomal subunit protein uL3 (207 aa).

Belongs to the universal ribosomal protein uL3 family. As to quaternary structure, part of the 50S ribosomal subunit. Forms a cluster with proteins L14 and L19.

Functionally, one of the primary rRNA binding proteins, it binds directly near the 3'-end of the 23S rRNA, where it nucleates assembly of the 50S subunit. The protein is Large ribosomal subunit protein uL3 of Thermotoga maritima (strain ATCC 43589 / DSM 3109 / JCM 10099 / NBRC 100826 / MSB8).